Consider the following 132-residue polypeptide: Large ribosomal subunit protein uL14 (132 aa).

This sequence belongs to the universal ribosomal protein uL14 family. As to quaternary structure, part of the 50S ribosomal subunit. Forms a cluster with proteins L3 and L24e, part of which may contact the 16S rRNA in 2 intersubunit bridges.

In terms of biological role, binds to 23S rRNA. Forms part of two intersubunit bridges in the 70S ribosome. This is Large ribosomal subunit protein uL14 from Methanobrevibacter smithii (strain ATCC 35061 / DSM 861 / OCM 144 / PS).